We begin with the raw amino-acid sequence, 336 residues long: Vacuolar protein sorting-associated protein 26B (336 aa).

Phosphoserine is present on residues Ser-302, Ser-304, and Ser-319.

The protein belongs to the VPS26 family. As to quaternary structure, component of the heterotrimeric retromer cargo-selective complex (CSC), also described as vacuolar protein sorting subcomplex (VPS), formed by VPS26 (VPS26A or VPS26B), VPS29 and VPS35. The CSC has a highly elongated structure with VPS26 and VPS29 binding independently at opposite distal ends of VPS35 as central platform. The CSC is believed to associate with variable sorting nexins to form functionally distinct retromer complex variants. The originally described SNX-BAR retromer is a pentamer containing the CSC and a heterodimeric membrane-deforming subcomplex formed between SNX1 or SNX2 and SNX5 or SNX6 (also called SNX-BAR subcomplex); the respective CSC and SNX-BAR subcomplexes associate with low affinity. The CSC associates with SNX3 to form a SNX3-retromer complex. The CSC associates with SNX27, the WASH complex and the SNX-BAR subcomplex to form the SNX27-retromer complex. Interacts with VPS29, VPS35, TBC1D5, GOLPH3, SNX27. In terms of tissue distribution, ubiquitously expressed in developing embryo and adult. Highly expressed in brain.

Its subcellular location is the cytoplasm. It localises to the membrane. The protein localises to the early endosome. It is found in the late endosome. Functionally, acts as a component of the retromer cargo-selective complex (CSC). The CSC is believed to be the core functional component of retromer or respective retromer complex variants acting to prevent missorting of selected transmembrane cargo proteins into the lysosomal degradation pathway. The recruitment of the CSC to the endosomal membrane involves RAB7A and SNX3. The SNX-BAR retromer mediates retrograde transport of cargo proteins from endosomes to the trans-Golgi network (TGN) and is involved in endosome-to-plasma membrane transport for cargo protein recycling. The SNX3-retromer mediates the retrograde transport of WLS distinct from the SNX-BAR retromer pathway. The SNX27-retromer is believed to be involved in endosome-to-plasma membrane trafficking and recycling of a broad spectrum of cargo proteins. The CSC seems to act as recruitment hub for other proteins, such as the WASH complex and TBC1D5. May be involved in retrograde transport of SORT1 but not of IGF2R. Acts redundantly with VSP26A in SNX-27 mediated endocytic recycling of SLC2A1/GLUT1. This chain is Vacuolar protein sorting-associated protein 26B (Vps26b), found in Mus musculus (Mouse).